The sequence spans 450 residues: Divalent metal cation transporter MntH (450 aa).

Transmembrane regions (helical) follow at residues 34–54 (LSFL…GNWI), 61–81 (AQYG…AMLL), 108–128 (IAII…IAEV), 141–161 (IPLI…LFIM), 170–190 (AIVG…VYIS), 212–232 (GILY…NLYL), 263–283 (IQLS…ASLF), 305–325 (PVLG…ALLA), 361–381 (SLAV…AAKI), 383–403 (QLLV…LIPL), and 422–442 (VNII…YLIV).

The protein belongs to the NRAMP family.

It localises to the cell membrane. H(+)-stimulated, divalent metal cation uptake system. This is Divalent metal cation transporter MntH from Staphylococcus aureus (strain Mu3 / ATCC 700698).